Consider the following 316-residue polypeptide: MNPNFLDFEQPIADLQAKIEELRLVGDDNALNISDEISRLQDKSHALTASIFGNLTSWQIAQLARHPRRPYTLDYLEHIFTEFEELHGDRHFTDDAAIVGGVARLDDQPVMVIGHQKGRDVREKVRRNFGMPRPEGYRKACRLMEMAERFKLPILTFIDTPGAYPGIDAEERNQSEAIAWNLRVMARLKTPIVSTVIGEGGSGGALAIGVCDRLNMLQYSTYAVISPEGCASILWRTAEKAADAAEAMGITAARLRELGIVDEVIGEPLGGAHRNPAATAESVRQTLLAQLESLRGLDADSLLEQRYERLMSYGRA.

Positions 39–293 (RLQDKSHALT…RQTLLAQLES (255 aa)) constitute a CoA carboxyltransferase C-terminal domain.

This sequence belongs to the AccA family. Acetyl-CoA carboxylase is a heterohexamer composed of biotin carboxyl carrier protein (AccB), biotin carboxylase (AccC) and two subunits each of ACCase subunit alpha (AccA) and ACCase subunit beta (AccD).

It is found in the cytoplasm. The enzyme catalyses N(6)-carboxybiotinyl-L-lysyl-[protein] + acetyl-CoA = N(6)-biotinyl-L-lysyl-[protein] + malonyl-CoA. Its pathway is lipid metabolism; malonyl-CoA biosynthesis; malonyl-CoA from acetyl-CoA: step 1/1. Functionally, component of the acetyl coenzyme A carboxylase (ACC) complex. First, biotin carboxylase catalyzes the carboxylation of biotin on its carrier protein (BCCP) and then the CO(2) group is transferred by the carboxyltransferase to acetyl-CoA to form malonyl-CoA. This Azotobacter vinelandii (strain DJ / ATCC BAA-1303) protein is Acetyl-coenzyme A carboxylase carboxyl transferase subunit alpha.